Here is a 433-residue protein sequence, read N- to C-terminus: Enolase (433 aa).

Glutamine 167 contacts (2R)-2-phosphoglycerate. Catalysis depends on glutamate 209, which acts as the Proton donor. Mg(2+) is bound by residues aspartate 246, glutamate 291, and aspartate 318. Positions 343, 372, 373, and 394 each coordinate (2R)-2-phosphoglycerate. The Proton acceptor role is filled by lysine 343.

The protein belongs to the enolase family. In terms of assembly, component of the RNA degradosome, a multiprotein complex involved in RNA processing and mRNA degradation. The cofactor is Mg(2+).

It is found in the cytoplasm. It localises to the secreted. Its subcellular location is the cell surface. It carries out the reaction (2R)-2-phosphoglycerate = phosphoenolpyruvate + H2O. It functions in the pathway carbohydrate degradation; glycolysis; pyruvate from D-glyceraldehyde 3-phosphate: step 4/5. Functionally, catalyzes the reversible conversion of 2-phosphoglycerate (2-PG) into phosphoenolpyruvate (PEP). It is essential for the degradation of carbohydrates via glycolysis. This chain is Enolase, found in Shewanella piezotolerans (strain WP3 / JCM 13877).